The following is a 137-amino-acid chain: NADH-quinone oxidoreductase subunit A 2 (137 aa).

The next 3 membrane-spanning stretches (helical) occupy residues 12 to 32 (WGFA…LGVS), 66 to 86 (FYLV…LFAW), and 95 to 115 (WAGL…LVYL).

It belongs to the complex I subunit 3 family. In terms of assembly, NDH-1 is composed of 13 different subunits. Subunits NuoA, H, J, K, L, M, N constitute the membrane sector of the complex.

Its subcellular location is the cell inner membrane. It catalyses the reaction a quinone + NADH + 5 H(+)(in) = a quinol + NAD(+) + 4 H(+)(out). Functionally, NDH-1 shuttles electrons from NADH, via FMN and iron-sulfur (Fe-S) centers, to quinones in the respiratory chain. The immediate electron acceptor for the enzyme in this species is believed to be ubiquinone. Couples the redox reaction to proton translocation (for every two electrons transferred, four hydrogen ions are translocated across the cytoplasmic membrane), and thus conserves the redox energy in a proton gradient. The chain is NADH-quinone oxidoreductase subunit A 2 from Pseudomonas aeruginosa (strain ATCC 15692 / DSM 22644 / CIP 104116 / JCM 14847 / LMG 12228 / 1C / PRS 101 / PAO1).